Reading from the N-terminus, the 563-residue chain is Ribulokinase (563 aa).

This sequence belongs to the ribulokinase family.

It carries out the reaction D-ribulose + ATP = D-ribulose 5-phosphate + ADP + H(+). It catalyses the reaction L-ribulose + ATP = L-ribulose 5-phosphate + ADP + H(+). It participates in carbohydrate degradation; L-arabinose degradation via L-ribulose; D-xylulose 5-phosphate from L-arabinose (bacterial route): step 2/3. This Mycolicibacterium smegmatis (Mycobacterium smegmatis) protein is Ribulokinase.